A 488-amino-acid polypeptide reads, in one-letter code: Neisserial heparin binding antigen (488 aa).

The first 17 residues, 1–17 (MFKRSVIAMACIFALSA), serve as a signal peptide directing secretion. Cys-18 carries N-palmitoyl cysteine lipidation. The S-diacylglycerol cysteine moiety is linked to residue Cys-18. The interval 21–201 (GGGGSPDVKS…NPAPANGGSN (181 aa)) is disordered. The segment covering 43–53 (SEKETEAKEDA) has biased composition (basic and acidic residues). Residues 54-70 (PQAGSQGQGAPSAQGSQ) show a composition bias toward low complexity. 2 stretches are compositionally biased toward polar residues: residues 101–118 (DMPQ…NHTP) and 127–142 (MENQ…QPAN). Over residues 160 to 183 (AGGQNAGNTAAQGANQAGNNQAAG) the composition is skewed to low complexity. Residues 296–306 (RFRRSARSRRS) carry the Arg-rich motif motif. The interval 306–488 (SLPAEMPLIP…GVFAGKKEQD (183 aa)) is C1 fragment.

The protein belongs to the NHBA family. As to quaternary structure, the C-terminal beta-barrel forms a monomer. Post-translationally, cleaved in vivo by the Neisserial phase-variable autotransporter/serine protease NalP to give 2 fragments. The N-terminus remains in the cell outer membrane while the 22 kDa C-terminus (beginning on Ser-293) is soluble; this soluble fragment is called C2. Cleaved in vitro by human lactoferrin (LTF, between Arg-305 and Ser-306), this fragment is called C1. Cleavage by NalP or lactoferrin does not alter killing of Neisseria by bactericidal antibodies in vitro. Recombinant and cell surface protein is cleaved by human saliva kallikrein (KLK1) between Ser-303 and Arg-304; in saliva kallikrein is more active on NHBA than lactoferrin. Human plasma kallikrein (KLKB1) cleaves in a similar manner to KLK1.

Its subcellular location is the cell outer membrane. It is found in the cell surface. The protein localises to the host mitochondrion. Functionally, a major human immunogenic protein detected in patients recovering from meningitidis, where it induces bactericidal antibodies. Binds heparin and heparan sulfate proteoglycan in vitro via the Arg-rich motif. Heparin-binding to this protein protects bacteria against killing by bactericidal antibodies (serum killing). Binds to human cells via the Arg-rich region; binding may require the intact protein as protein fragments do not bind to human cells. Protein binding to human cells is abolished by treatment with heparinase III but not chondroitinase ABC. The bacteria binds a number of human extracellular sialyated and/or sulfated glycans via this protein, including chondroitin sulfate (KD=5.2 nM), heparin (KD=52 nM) and ganglioside GT3 (KD=210 nM). The recombinant protein binds DNA non-specifically. In terms of biological role, plays a role in extracellular-DNA (eDNA) mediated biofilm formation. In strain MC58 eDNA stimulates biofilm formation. When NHBA is not processed by NalP there is an increase in positively charged, NHBA- and IgA-derived DNA-binding peptides on the cell surface, resulting in increased DNA-binding peptides and increased biofilm formation. Its function is as follows. [C2 fragment] Localizes to host mitochondria when applied to the apical side of human endothelial cell layers, where it induces production of reactive oxygen species which lead to increased permeability of host endothelial cells. The C1 fragment (which lacks the first 14 residues of C2) does not have this effect. It is not known if this occurs during Neisseria infections. In Neisseria meningitidis serogroup B (strain ATCC BAA-335 / MC58), this protein is Neisserial heparin binding antigen.